Reading from the N-terminus, the 325-residue chain is Probable NADH kinase (325 aa).

It belongs to the NAD kinase family. Homodimer.

It localises to the cytoplasm. The enzyme catalyses NADH + ATP = ADP + NADPH + H(+). Key source of the cellular reductant NADPH which is an important antioxidant factor. The chain is Probable NADH kinase from Oryza sativa subsp. japonica (Rice).